Consider the following 204-residue polypeptide: Viral interleukin-6 homolog (204 aa).

A signal peptide spans 1-22 (MRWFKLWSILLVGSLLVSGTRG).

The protein belongs to the IL-6 superfamily. In terms of assembly, interacts with host IL6ST.

Initiates signal transduction through binding to interleukin-6 receptor subunit beta IL6ST, independently of the cognate IL6 receptor IL6R. In infected primary effusion lymphoma cells, promotes proliferation of cells, protects them from apoptosis, and promotes immune evasion of interferon activity. Also drives blood to lymphatic endothelial cell differentiation. This chain is Viral interleukin-6 homolog (K2), found in Homo sapiens (Human).